The chain runs to 291 residues: ATP synthase subunit a (291 aa).

Transmembrane regions (helical) follow at residues 51-71 (FSFT…LLLV), 117-137 (FFPC…QGMI), 146-166 (HFLI…IVGF), 173-193 (FLSF…LVLL), 213-233 (MMAG…MLCM), and 239-259 (FIGD…ELGV).

The protein belongs to the ATPase A chain family. In terms of assembly, F-type ATPases have 2 components, CF(1) - the catalytic core - and CF(0) - the membrane proton channel. CF(1) has five subunits: alpha(3), beta(3), gamma(1), delta(1), epsilon(1). CF(0) has three main subunits: a, b and c.

Its subcellular location is the mitochondrion inner membrane. Mitochondrial membrane ATP synthase (F(1)F(0) ATP synthase or Complex V) produces ATP from ADP in the presence of a proton gradient across the membrane which is generated by electron transport complexes of the respiratory chain. F-type ATPases consist of two structural domains, F(1) - containing the extramembraneous catalytic core and F(0) - containing the membrane proton channel, linked together by a central stalk and a peripheral stalk. During catalysis, ATP synthesis in the catalytic domain of F(1) is coupled via a rotary mechanism of the central stalk subunits to proton translocation. Key component of the proton channel; it may play a direct role in the translocation of protons across the membrane. The sequence is that of ATP synthase subunit a (ATP6) from Vicia faba (Broad bean).